The following is a 382-amino-acid chain: MKITKITTYRLPPRWMFLKIETDEGVVGWGEPVIEGRARTVEAAVHELSDYLIGQDPSRINDLWQVMYRAGFYRGGPILMSAIAGIDQALWDIKGKVLNAPVWQLMGGLVRDKIKAYSWVGGDRPADVIDGIKTLREIGFDTFKLNGCEELGLIDNSRAVDAAVNTVAQIREAFGNQIEFGLDFHGRVSAPMAKVLIKELEPYRPLFIEEPVLAEQAEYYPKLAAQTHIPLAAGERMFSRFDFKRVLEAGGISILQPDLSHAGGITECYKIAGMAEAYDVTLAPHCPLGPIALAACLHIDFVSYNAVLQEQSMGIHYNKGAELLDFVKNKEDFSMVGGFFKPLTKPGLGVEIDEAKVIEFSKNAPDWRNPLWRHEDNSVAEW.

D183 is a Mg(2+) binding site. H185 (proton donor) is an active-site residue. Mg(2+) contacts are provided by E209 and E235. The active-site Proton acceptor is H285.

Belongs to the mandelate racemase/muconate lactonizing enzyme family. GalD subfamily. It depends on Mg(2+) as a cofactor.

It catalyses the reaction D-galactonate = 2-dehydro-3-deoxy-D-galactonate + H2O. It functions in the pathway carbohydrate acid metabolism; D-galactonate degradation; D-glyceraldehyde 3-phosphate and pyruvate from D-galactonate: step 1/3. Its function is as follows. Catalyzes the dehydration of D-galactonate to 2-keto-3-deoxy-D-galactonate. This Escherichia coli O45:K1 (strain S88 / ExPEC) protein is D-galactonate dehydratase.